The chain runs to 145 residues: Nicking endonuclease (145 aa).

A disordered region spans residues 126-145 (NPQEKTQVKTETKSGFARFL).

Its function is as follows. Endonuclease responsible for the single-chain interruptions (nicks) located at specific positions in the minus strand of the viral genome. The protein is Nicking endonuclease of Escherichia phage T5 (Enterobacteria phage T5).